A 274-amino-acid polypeptide reads, in one-letter code: Protein CURLY FLAG LEAF 1 (274 aa).

Positions 17–44 (SLNGGGGGGGGRRRGRRAAAAEGSDDSE) are disordered. The EAR signature appears at 47–52 (TVELNS). A WW domain is found at 54–88 (VALPYHWEQCLDIRTGQVYYINWEDGTRTTIDPRS). 2 disordered regions span residues 83–133 (TIDP…SGYT) and 175–216 (GRDG…SPTD). Composition is skewed to low complexity over residues 87–106 (RSSS…SSSR), 121–133 (AAAA…SGYT), and 184–207 (SSSS…AVSS).

Binds to HDG1.

Negatively regulates the cuticle development probably by interacting with the HD-ZIP IV transcription factor HDG1. The chain is Protein CURLY FLAG LEAF 1 from Oryza sativa subsp. japonica (Rice).